Here is a 211-residue protein sequence, read N- to C-terminus: Superoxide dismutase [Cu-Zn], chloroplastic (211 aa).

The transit peptide at 1–57 (MQAILAAAMAAQTLLFSATAPPASLFQSPSSARPFHSLRLAAGPAGAAAARALVVAD) directs the protein to the chloroplast. Residues His-103, His-105, and His-120 each coordinate Cu cation. An intrachain disulfide couples Cys-114 to Cys-203. The Zn(2+) site is built by His-120, His-128, His-137, and Asp-140. His-177 serves as a coordination point for Cu cation.

The protein belongs to the Cu-Zn superoxide dismutase family. As to quaternary structure, homotetramer. Requires Cu cation as cofactor. Zn(2+) is required as a cofactor.

The protein localises to the plastid. Its subcellular location is the chloroplast. The enzyme catalyses 2 superoxide + 2 H(+) = H2O2 + O2. In terms of biological role, destroys radicals which are normally produced within the cells and which are toxic to biological systems. This Oryza sativa subsp. japonica (Rice) protein is Superoxide dismutase [Cu-Zn], chloroplastic (SODCP).